A 259-amino-acid polypeptide reads, in one-letter code: Eukaryotic translation initiation factor 3 subunit G-2 (259 aa).

The 79-residue stretch at 179 to 257 (SAVRISNLSE…LILSVEWSKP (79 aa)) folds into the RRM domain.

This sequence belongs to the eIF-3 subunit G family. As to quaternary structure, component of the eukaryotic translation initiation factor 3 (eIF-3) complex. The eIF-3 complex interacts with pix.

It is found in the cytoplasm. RNA-binding component of the eukaryotic translation initiation factor 3 (eIF-3) complex, which is involved in protein synthesis of a specialized repertoire of mRNAs and, together with other initiation factors, stimulates binding of mRNA and methionyl-tRNAi to the 40S ribosome. The eIF-3 complex specifically targets and initiates translation of a subset of mRNAs involved in cell proliferation. This subunit can bind 18S rRNA. This Drosophila virilis (Fruit fly) protein is Eukaryotic translation initiation factor 3 subunit G-2.